Consider the following 709-residue polypeptide: MLNFFAAAPKGFEYSLAQELTEFGATEVKESVAGVYFTASLALAYRITLWTRLASRIVLVIYKGSCESAEQLYNAAYCVDWPAHFSNKSTFSIDFHGTGGFLNNTQFGALKIKDAIVDRFRDDDIERPNVSRVDAEFKVDAHFRNGVITIAMNFSGPSLHQRGYRSTTGEAPLKENLAANMLVRSGWQAAPSTLLDPFCGSGTVLIEAALMAADIAPGLQRSRFGFEHWRRHDKAVWQEIVEEAKARASLGVKRCEIKFYGSDIDSRLVALAKRNAENAGVLELIEFKVADALTITPPAESGYLITNPPYGERLGNVSELLQLYYQLGDKFKKEFGGWKVAMLCSDIELVSSLKLKADKQMKMFNGALECAFNIYTLHANSTRRDTPVLPDGVDIADIAPAFANRIKKNAKLLEKWAKKEGIDSYRIYDADIPEYNVAVDKYLDYVIIQEYMAPATIPEAVTKRRLSDVLLALPSAIGINPNKMIMKTRERQKGTSQYQKLDERKLELITTEYGAKFKLNLTGYLDTGLFLDHRLTRRLVGQKSKGRRVLNLFSYTGSASVHAALGGAKSVTTVDMSNTYIAWAKDNFALNGLQGKQYEFVQSDCMQWIRDCNEQYDLIFIDPPTFSNSKRMEDSFDVQRDHVNLLSSLVKLLSPTGELVFSNNKRKFKMDIETLTKMNINVTNIDDVTLPMDYKRNPHIHNTWLITHA.

The THUMP domain maps to 43–154; the sequence is LAYRITLWTR…NGVITIAMNF (112 aa).

It belongs to the methyltransferase superfamily. RlmKL family.

It is found in the cytoplasm. It carries out the reaction guanosine(2445) in 23S rRNA + S-adenosyl-L-methionine = N(2)-methylguanosine(2445) in 23S rRNA + S-adenosyl-L-homocysteine + H(+). The enzyme catalyses guanosine(2069) in 23S rRNA + S-adenosyl-L-methionine = N(2)-methylguanosine(2069) in 23S rRNA + S-adenosyl-L-homocysteine + H(+). Its function is as follows. Specifically methylates the guanine in position 2445 (m2G2445) and the guanine in position 2069 (m7G2069) of 23S rRNA. The protein is Ribosomal RNA large subunit methyltransferase K/L of Shewanella baltica (strain OS185).